Reading from the N-terminus, the 251-residue chain is Flap endonuclease Xni (251 aa).

Position 104 (Asp-104) interacts with Mg(2+). Residues 160–249 form the 5'-3' exonuclease domain; the sequence is VQPQQLPDYW…IDGNLQQLRL (90 aa). K(+)-binding residues include Leu-171, Ala-172, Pro-180, Val-182, and Ile-185. Residues 184 to 189 form an interaction with DNA region; it reads GIGPKS.

This sequence belongs to the Xni family. The cofactor is Mg(2+). K(+) is required as a cofactor.

Functionally, has flap endonuclease activity. During DNA replication, flap endonucleases cleave the 5'-overhanging flap structure that is generated by displacement synthesis when DNA polymerase encounters the 5'-end of a downstream Okazaki fragment. This Escherichia coli O45:K1 (strain S88 / ExPEC) protein is Flap endonuclease Xni.